We begin with the raw amino-acid sequence, 442 residues long: tRNA-2-methylthio-N(6)-dimethylallyladenosine synthase (442 aa).

In terms of domain architecture, MTTase N-terminal spans 3-120 (KKLYIETHGC…LPEMIDAARI (118 aa)). [4Fe-4S] cluster contacts are provided by Cys12, Cys49, Cys83, Cys157, Cys161, and Cys164. The 233-residue stretch at 143-375 (RVDGPSAYVS…QHRLNQQGFE (233 aa)) folds into the Radical SAM core domain. The region spanning 378-442 (RQMVGSIQRI…PHSLRGSLLQ (65 aa)) is the TRAM domain.

Belongs to the methylthiotransferase family. MiaB subfamily. As to quaternary structure, monomer. It depends on [4Fe-4S] cluster as a cofactor.

It is found in the cytoplasm. It carries out the reaction N(6)-dimethylallyladenosine(37) in tRNA + (sulfur carrier)-SH + AH2 + 2 S-adenosyl-L-methionine = 2-methylsulfanyl-N(6)-dimethylallyladenosine(37) in tRNA + (sulfur carrier)-H + 5'-deoxyadenosine + L-methionine + A + S-adenosyl-L-homocysteine + 2 H(+). In terms of biological role, catalyzes the methylthiolation of N6-(dimethylallyl)adenosine (i(6)A), leading to the formation of 2-methylthio-N6-(dimethylallyl)adenosine (ms(2)i(6)A) at position 37 in tRNAs that read codons beginning with uridine. The protein is tRNA-2-methylthio-N(6)-dimethylallyladenosine synthase of Pseudomonas savastanoi pv. phaseolicola (strain 1448A / Race 6) (Pseudomonas syringae pv. phaseolicola (strain 1448A / Race 6)).